The primary structure comprises 231 residues: 2,3-bisphosphoglycerate-dependent phosphoglycerate mutase (231 aa).

Substrate-binding positions include 8–15 (RHGESEWN), 21–22 (TG), R60, 87–90 (ERHY), K98, 114–115 (RR), and 183–184 (GN). Catalysis depends on H9, which acts as the Tele-phosphohistidine intermediate. Residue E87 is the Proton donor/acceptor of the active site.

This sequence belongs to the phosphoglycerate mutase family. BPG-dependent PGAM subfamily.

It carries out the reaction (2R)-2-phosphoglycerate = (2R)-3-phosphoglycerate. Its pathway is carbohydrate degradation; glycolysis; pyruvate from D-glyceraldehyde 3-phosphate: step 3/5. In terms of biological role, catalyzes the interconversion of 2-phosphoglycerate and 3-phosphoglycerate. The protein is 2,3-bisphosphoglycerate-dependent phosphoglycerate mutase of Streptococcus pyogenes serotype M49 (strain NZ131).